Here is a 528-residue protein sequence, read N- to C-terminus: Beta-hexosaminidase subunit alpha (528 aa).

The signal sequence occupies residues Met1–Ala22. The propeptide occupies Leu23–Gln88. The cysteines at positions 58 and 104 are disulfide-linked. Asn115, Asn157, and Asn295 each carry an N-linked (GlcNAc...) asparagine glycan. The cysteines at positions 277 and 328 are disulfide-linked. Glu323 serves as the catalytic Proton donor. The critical for hydrolysis GM2 gangliosides stretch occupies residues Asn422–Arg423. Asn487 carries an N-linked (GlcNAc...) asparagine glycan. A disulfide bridge connects residues Cys504 and Cys521.

Belongs to the glycosyl hydrolase 20 family. There are 3 beta-hexosaminidase isozymes: isozyme A (hexosaminidase A) is a heterodimer composed of one subunit alpha and one subunit beta (chain A and B); isozyme B (hexosaminidase B) is a homodimer of two beta subunits (two chains A and B); isozyme S (hexosaminidase S) is a homodimer of two alpha subunits. The composition of the dimer (isozyme A versus isozyme S) has a significant effect on the substrate specificity of the alpha subunit active site. Ubiquitous. Most abundant in testis, adrenal, epididymis and heart. Low levels seen in the liver.

The protein resides in the lysosome. It carries out the reaction Hydrolysis of terminal non-reducing N-acetyl-D-hexosamine residues in N-acetyl-beta-D-hexosaminides.. The catalysed reaction is N-acetyl-beta-D-galactosaminyl-(1-&gt;4)-beta-D-3-sulfogalactosyl-(1-&gt;4)-beta-D-glucosyl-(1&lt;-&gt;1')-ceramide + H2O = a beta-D-3-sulfogalactosyl-(1-&gt;4)-beta-D-glucosyl-(1&lt;-&gt;1')-ceramide + N-acetyl-beta-D-galactosamine. The enzyme catalyses a ganglioside GM2 (d18:1(4E)) + H2O = a ganglioside GM3 (d18:1(4E)) + N-acetyl-beta-D-galactosamine. It catalyses the reaction a ganglioside GM2 + H2O = a ganglioside GM3 + N-acetyl-beta-D-galactosamine. It carries out the reaction beta-D-GalNAc-(1-&gt;4)-alpha-L-IdoA-(1-&gt;3)-beta-D-GalNAc-4-sulfate-(1-&gt;4)-alpha-L-IdoA-(1-&gt;3)-D-GalNAc-4-sulfate + H2O = alpha-L-IdoA-(1-&gt;3)-beta-D-GalNAc-4-sulfate-(1-&gt;4)-alpha-L-IdoA-(1-&gt;3)-D-GalNAc-4-sulfate + N-acetyl-D-galactosamine. The catalysed reaction is N-acetyl-beta-D-6-sulfogalactosaminyl-(1-&gt;4)-alpha-L-iduronyl-(1-&gt;3)-N-acetyl-D-6-sulfogalactosamine + H2O = alpha-L-iduronyl-(1-&gt;3)-N-acetyl-D-6-sulfogalactosamine + N-acetyl-D-6-sulfogalactosamine. Its activity is regulated as follows. Addition of GM2A stimulates the hydrolysis of sulfated glycosphingolipid SM2 and the ganglioside GM2. In terms of biological role, hydrolyzes the non-reducing end N-acetyl-D-hexosamine and/or sulfated N-acetyl-D-hexosamine of glycoconjugates, such as the oligosaccharide moieties from proteins and neutral glycolipids, or from certain mucopolysaccharides. The isozyme S is as active as the isozyme A on the anionic bis-sulfated glycans, the chondroitin-6-sulfate trisaccharide (C6S-3), and the dermatan sulfate pentasaccharide, and the sulfated glycosphingolipid SM2. The isozyme B does not hydrolyze each of these substrates, however hydrolyzes efficiently neutral oligosaccharide. Only the isozyme A is responsible for the degradation of GM2 gangliosides in the presence of GM2A. The polypeptide is Beta-hexosaminidase subunit alpha (Mus musculus (Mouse)).